Consider the following 452-residue polypeptide: Cobyrinate a,c-diamide synthase (452 aa).

Residues 244-429 form the GATase cobBQ-type domain; the sequence is RIAVARDRAF…LHLHWGTQAW (186 aa). Cys325 (nucleophile) is an active-site residue.

It belongs to the CobB/CbiA family. It depends on Mg(2+) as a cofactor.

The catalysed reaction is cob(II)yrinate + 2 L-glutamine + 2 ATP + 2 H2O = cob(II)yrinate a,c diamide + 2 L-glutamate + 2 ADP + 2 phosphate + 2 H(+). It functions in the pathway cofactor biosynthesis; adenosylcobalamin biosynthesis; cob(II)yrinate a,c-diamide from sirohydrochlorin (anaerobic route): step 10/10. Catalyzes the ATP-dependent amidation of the two carboxylate groups at positions a and c of cobyrinate, using either L-glutamine or ammonia as the nitrogen source. This chain is Cobyrinate a,c-diamide synthase, found in Gloeobacter violaceus (strain ATCC 29082 / PCC 7421).